The sequence spans 298 residues: Inosose dehydratase (298 aa).

This sequence belongs to the IolE/MocC family. Glutathione serves as cofactor. Co(2+) is required as a cofactor. It depends on Mn(2+) as a cofactor.

It catalyses the reaction scyllo-inosose = 3D-3,5/4-trihydroxycyclohexane-1,2-dione + H2O. Its pathway is polyol metabolism; myo-inositol degradation into acetyl-CoA; acetyl-CoA from myo-inositol: step 2/7. In terms of biological role, catalyzes the dehydration of inosose (2-keto-myo-inositol, 2KMI or 2,4,6/3,5-pentahydroxycyclohexanone) to 3D-(3,5/4)-trihydroxycyclohexane-1,2-dione (D-2,3-diketo-4-deoxy-epi-inositol). This chain is Inosose dehydratase, found in Clostridium tetani (strain Massachusetts / E88).